Consider the following 131-residue polypeptide: Peptide methionine sulfoxide reductase MsrB (131 aa).

Residues 8-130 enclose the MsrB domain; sequence LEEWKEMLDP…NSVCLDLVPR (123 aa). Cys-47, Cys-50, Cys-96, and Cys-99 together coordinate Zn(2+). The Nucleophile role is filled by Cys-119.

The protein belongs to the MsrB Met sulfoxide reductase family. The cofactor is Zn(2+).

The enzyme catalyses L-methionyl-[protein] + [thioredoxin]-disulfide + H2O = L-methionyl-(R)-S-oxide-[protein] + [thioredoxin]-dithiol. The sequence is that of Peptide methionine sulfoxide reductase MsrB from Pseudomonas savastanoi pv. phaseolicola (strain 1448A / Race 6) (Pseudomonas syringae pv. phaseolicola (strain 1448A / Race 6)).